Reading from the N-terminus, the 159-residue chain is NADH-quinone oxidoreductase subunit B 2 (159 aa).

Residues cysteine 37, cysteine 38, cysteine 102, and cysteine 132 each contribute to the [4Fe-4S] cluster site.

It belongs to the complex I 20 kDa subunit family. In terms of assembly, NDH-1 is composed of 14 different subunits. Subunits NuoB, C, D, E, F, and G constitute the peripheral sector of the complex. [4Fe-4S] cluster is required as a cofactor.

It is found in the cell inner membrane. It catalyses the reaction a quinone + NADH + 5 H(+)(in) = a quinol + NAD(+) + 4 H(+)(out). In terms of biological role, NDH-1 shuttles electrons from NADH, via FMN and iron-sulfur (Fe-S) centers, to quinones in the respiratory chain. Couples the redox reaction to proton translocation (for every two electrons transferred, four hydrogen ions are translocated across the cytoplasmic membrane), and thus conserves the redox energy in a proton gradient. This is NADH-quinone oxidoreductase subunit B 2 from Azoarcus sp. (strain BH72).